A 304-amino-acid chain; its full sequence is Large ribosomal subunit protein uL18y (304 aa).

It belongs to the universal ribosomal protein uL18 family. Component of the large ribosomal subunit (LSU).

It localises to the cytoplasm. The protein resides in the nucleus. Its function is as follows. Component of the ribosome, a large ribonucleoprotein complex responsible for the synthesis of proteins in the cell. The small ribosomal subunit (SSU) binds messenger RNAs (mRNAs) and translates the encoded message by selecting cognate aminoacyl-transfer RNA (tRNA) molecules. The large subunit (LSU) contains the ribosomal catalytic site termed the peptidyl transferase center (PTC), which catalyzes the formation of peptide bonds, thereby polymerizing the amino acids delivered by tRNAs into a polypeptide chain. The nascent polypeptides leave the ribosome through a tunnel in the LSU and interact with protein factors that function in enzymatic processing, targeting, and the membrane insertion of nascent chains at the exit of the ribosomal tunnel. The chain is Large ribosomal subunit protein uL18y (RPL5B) from Oryza sativa subsp. japonica (Rice).